Here is a 334-residue protein sequence, read N- to C-terminus: Methionine adenosyltransferase 2 subunit beta (334 aa).

Residues 37–40 (TGLL), 60–62 (FRR), 71–72 (NL), C93, R97, Y159, and L185 each bind NADP(+). T309 carries the post-translational modification Phosphothreonine. The tract at residues 319-334 (LWPFLIDKRWRQTVFH) is required for interaction with MAT2A.

Belongs to the dTDP-4-dehydrorhamnose reductase family. MAT2B subfamily. In terms of assembly, heterotrimer; composed of a catalytic MAT2A homodimer that binds one regulatory MAT2B chain. Heterohexamer; composed of a central, catalytic MAT2A homotetramer flanked on either side by a regulatory MAT2B chain. NADP binding increases the affinity for MAT2A.

It functions in the pathway amino-acid biosynthesis; S-adenosyl-L-methionine biosynthesis; S-adenosyl-L-methionine from L-methionine: step 1/1. In terms of biological role, regulatory subunit of S-adenosylmethionine synthetase 2, an enzyme that catalyzes the formation of S-adenosylmethionine from methionine and ATP. Regulates MAT2A catalytic activity by changing its kinetic properties, increasing its affinity for L-methionine. Can bind NADP (in vitro). This Mus musculus (Mouse) protein is Methionine adenosyltransferase 2 subunit beta (Mat2b).